The primary structure comprises 498 residues: ATP synthase subunit beta, chloroplastic (498 aa).

172–179 (GGAGVGKT) provides a ligand contact to ATP.

It belongs to the ATPase alpha/beta chains family. In terms of assembly, F-type ATPases have 2 components, CF(1) - the catalytic core - and CF(0) - the membrane proton channel. CF(1) has five subunits: alpha(3), beta(3), gamma(1), delta(1), epsilon(1). CF(0) has four main subunits: a(1), b(1), b'(1) and c(9-12).

The protein resides in the plastid. Its subcellular location is the chloroplast thylakoid membrane. The enzyme catalyses ATP + H2O + 4 H(+)(in) = ADP + phosphate + 5 H(+)(out). In terms of biological role, produces ATP from ADP in the presence of a proton gradient across the membrane. The catalytic sites are hosted primarily by the beta subunits. This is ATP synthase subunit beta, chloroplastic from Canella winterana (Wild cinnamon).